The following is a 245-amino-acid chain: MYMLNNMLNDVPTPWGMFFQDSATPNMEGMMELHNNVMFYLCMMLGFVSYMLYNMLTTYNHSVLPYKYLYHGQFIEIVWTTFPAMILLIIAFPSFILLYICDEVIAPAMTIKAMGLQWYWKYEYSDFIDDKGETIEFESYMIPEDLLEEGQLRQLDVDSPIVCPVDTHMRFIVTAADVIHDFAMPSLGIKIDAVPGRLNQTSALIQREGVYYGQCSELCGVMHSSMPIKIEAVSLGEFLAWIDEQ.

The Mitochondrial intermembrane portion of the chain corresponds to 1–36 (MYMLNNMLNDVPTPWGMFFQDSATPNMEGMMELHNN). A helical transmembrane segment spans residues 37-56 (VMFYLCMMLGFVSYMLYNML). Over 57–76 (TTYNHSVLPYKYLYHGQFIE) the chain is Mitochondrial matrix. A helical membrane pass occupies residues 77–101 (IVWTTFPAMILLIIAFPSFILLYIC). At 102-245 (DEVIAPAMTI…GEFLAWIDEQ (144 aa)) the chain is on the mitochondrial intermembrane side. Cu cation contacts are provided by His-180, Cys-215, Glu-217, Cys-219, His-223, and Met-226. Position 217 (Glu-217) interacts with Mg(2+).

This sequence belongs to the cytochrome c oxidase subunit 2 family. Component of the cytochrome c oxidase (complex IV, CIV), a multisubunit enzyme composed of a catalytic core of 3 subunits and several supernumerary subunits. The complex exists as a monomer or a dimer and forms supercomplexes (SCs) in the inner mitochondrial membrane with ubiquinol-cytochrome c oxidoreductase (cytochrome b-c1 complex, complex III, CIII). It depends on Cu cation as a cofactor.

It is found in the mitochondrion inner membrane. It carries out the reaction 4 Fe(II)-[cytochrome c] + O2 + 8 H(+)(in) = 4 Fe(III)-[cytochrome c] + 2 H2O + 4 H(+)(out). Its function is as follows. Component of the cytochrome c oxidase, the last enzyme in the mitochondrial electron transport chain which drives oxidative phosphorylation. The respiratory chain contains 3 multisubunit complexes succinate dehydrogenase (complex II, CII), ubiquinol-cytochrome c oxidoreductase (cytochrome b-c1 complex, complex III, CIII) and cytochrome c oxidase (complex IV, CIV), that cooperate to transfer electrons derived from NADH and succinate to molecular oxygen, creating an electrochemical gradient over the inner membrane that drives transmembrane transport and the ATP synthase. Cytochrome c oxidase is the component of the respiratory chain that catalyzes the reduction of oxygen to water. Electrons originating from reduced cytochrome c in the intermembrane space (IMS) are transferred via the dinuclear copper A center (CU(A)) of subunit 2 and heme A of subunit 1 to the active site in subunit 1, a binuclear center (BNC) formed by heme A3 and copper B (CU(B)). The BNC reduces molecular oxygen to 2 water molecules using 4 electrons from cytochrome c in the IMS and 4 protons from the mitochondrial matrix. This Dekkera bruxellensis (Brettanomyces custersii) protein is Cytochrome c oxidase subunit 2 (COX2).